The primary structure comprises 539 residues: M protein, serotype 24 (539 aa).

Positions 1–42 (MTKNNTNRHYSLRKLKTGTASVAVALTVLGAGLVVNTNEVSA) are cleaved as a signal peptide. One copy of the A-1 repeat lies at 118–152 (LEARKADLEKALEGAMNFSTADSAKIKTLEAEKAA). The segment at 118–301 (LEARKADLEK…ALEAEKADLE (184 aa)) is 5.3 X 35 AA tandem repeats, A-type. Residues 153-187 (LAARKADLEKALEGAMNFSTADSAKIKTLEAEKAA) form an A-2 repeat. An A-3 repeat occupies 188 to 222 (LEARQAELEKALEGAMNFSTADSAKIKTLEAEKAA). An A-4 repeat occupies 223–257 (LAARKADLEKALEGAMNFSTADSAKIKTLEAEKAA). The A-5 repeat unit spans residues 258-292 (LEARQAELEKALEGAMNFSTADSAKIKTLEAEKAA). One copy of the A-6; truncated repeat lies at 293-297 (LEAEK). A disordered region spans residues 297-401 (KADLEHQSQV…REAKKQVEKA (105 aa)). C repeat units follow at residues 298 to 332 (ADLEHQSQVLNANRQSLRRDLDASREAKKQLEAEH), 333 to 367 (QKLEEQNKISEASRQSLRRDLDASREAKKQLEAEH), and 368 to 402 (QKLEEQNKISEASRQSLRRDLDASREAKKQVEKAL). Over residues 303–312 (QSQVLNANRQ) the composition is skewed to polar residues. Basic and acidic residues-rich tracts occupy residues 314-340 (LRRDLDASREAKKQLEAEHQKLEEQNK), 349-375 (LRRDLDASREAKKQLEAEHQKLEEQNK), and 384-401 (LRRDLDASREAKKQVEKA). D repeat units lie at residues 435 to 440 (AKLEAE), 441 to 446 (AKALKE), 449 to 454 (AKQAEE), and 456 to 461 (AKLRAG). A disordered region spans residues 456–511 (AKLRAGKASDSQTPDAKPGNKAVPGKGQAPQAGTKPNQNKAPMKETKRQLPSTGET). Residues 505–509 (LPSTG) carry the LPXTG sorting signal motif. Thr508 carries the pentaglycyl murein peptidoglycan amidated threonine modification. Residues 509 to 539 (GETANPFFTAAALTVMATAGVAAVVKRKEEN) constitute a propeptide, removed by sortase.

It belongs to the M protein family.

Its subcellular location is the secreted. It is found in the cell wall. In terms of biological role, this protein is one of the different antigenic serotypes of protein M. Protein M is closely associated with virulence of the bacterium and can render the organism resistant to phagocytosis. The sequence is that of M protein, serotype 24 (emm24) from Streptococcus pyogenes.